Consider the following 107-residue polypeptide: uncharacterized protein (107 aa).

The chain crosses the membrane as a helical span at residues 62–79 (LLVVIVYYFSHVGSFSLA).

It localises to the nucleus membrane. This is an uncharacterized protein from Schizosaccharomyces pombe (strain 972 / ATCC 24843) (Fission yeast).